We begin with the raw amino-acid sequence, 1127 residues long: uncharacterized protein (1127 aa).

The first 26 residues, 1–26 (MRIHQRSAPCVPVLLFLFLPSAPLCA), serve as a signal peptide directing secretion. The tract at residues 533–600 (ETESLSPPAD…ASSSPSEMAV (68 aa)) is disordered. Composition is skewed to low complexity over residues 536–549 (SLSPPADTASTPSP) and 583–599 (AGASEEADASSSPSEMA). The stretch at 1076-1126 (SEDEKEYQRALQELQKGNKLVASAVVEQLLQKDRNKKSAKIQQLKKRIDAQ) forms a coiled coil.

This is an uncharacterized protein from Treponema pallidum (strain Nichols).